A 109-amino-acid chain; its full sequence is Aquaporin-2 (109 aa).

The Cytoplasmic segment spans residues 1-6 (SIAFSR). The helical transmembrane segment at 7–27 (AVLSEFLATLLFVFFGLGSAL) threads the bilayer. The Extracellular portion of the chain corresponds to 28–35 (NWPQALPS). A helical transmembrane segment spans residues 36–54 (VLQIAMAFGLAIGTLVQTL). Topologically, residues 55-59 (GHISG) are cytoplasmic. An intramembrane region (discontinuously helical) is located at residues 60–69 (AHINPAVTIA). The NPA 1 motif lies at 63 to 65 (NPA). Residues 70-80 (CLVGCHVSFLR) lie on the Cytoplasmic side of the membrane. A helical membrane pass occupies residues 81 to 102 (ALFYLAAQLLGAVAGAALLHEL). The Extracellular segment spans residues 103-109 (TPPDIRG).

It belongs to the MIP/aquaporin (TC 1.A.8) family. Homotetramer. In terms of processing, serine phosphorylation is necessary and sufficient for expression at the apical membrane. Endocytosis is not phosphorylation-dependent. Post-translationally, N-glycosylated.

Its subcellular location is the apical cell membrane. It localises to the basolateral cell membrane. It is found in the cell membrane. The protein localises to the cytoplasmic vesicle membrane. The protein resides in the golgi apparatus. Its subcellular location is the trans-Golgi network membrane. It carries out the reaction H2O(in) = H2O(out). The enzyme catalyses glycerol(in) = glycerol(out). In terms of biological role, forms a water-specific channel that provides the plasma membranes of renal collecting duct with high permeability to water, thereby permitting water to move in the direction of an osmotic gradient. Plays an essential role in renal water homeostasis. Could also be permeable to glycerol. The polypeptide is Aquaporin-2 (Procavia capensis habessinica (Abyssinian hyrax)).